The chain runs to 200 residues: Recombination protein RecR (200 aa).

The segment at 57–72 (CRQCRTLTEQELCPQC) adopts a C4-type zinc-finger fold. In terms of domain architecture, Toprim spans 80 to 175 (TQLCVVEGPV…TATRIAHGVP (96 aa)).

Belongs to the RecR family.

May play a role in DNA repair. It seems to be involved in an RecBC-independent recombinational process of DNA repair. It may act with RecF and RecO. In Pseudomonas entomophila (strain L48), this protein is Recombination protein RecR.